The following is a 249-amino-acid chain: Myelin protein P0 (249 aa).

Residues 1-29 (MALGAIGDGRLLLLLVGLLSASGPSPTLA) form the signal peptide. One can recognise an Ig-like V-type domain in the interval 30–143 (IHVYTPREVY…DIVGKSSQVT (114 aa)). Residues 30–153 (IHVYTPREVY…LYVLEKVPTR (124 aa)) are Extracellular-facing. The cysteines at positions 50 and 127 are disulfide-linked. Asparagine 122 carries N-linked (GlcNAc...) asparagine glycosylation. The helical transmembrane segment at 154–179 (YGVVLGSIIGGVLLLVALLVAVVYLV) threads the bilayer. Over 180–249 (RFCWLRRQAV…APGEARKDKK (70 aa)) the chain is Cytoplasmic. Positions 227–249 (RSAKAAAEKKSKGAPGEARKDKK) are disordered.

It belongs to the myelin P0 protein family. In terms of tissue distribution, found only in peripheral nervous system Schwann cells.

Its subcellular location is the cell membrane. In terms of biological role, is an adhesion molecule necessary for normal myelination in the peripheral nervous system. It mediates adhesion between adjacent myelin wraps and ultimately drives myelin compaction. The polypeptide is Myelin protein P0 (MPZ) (Gallus gallus (Chicken)).